A 297-amino-acid polypeptide reads, in one-letter code: MKNSLQGAMTALITPFKNQKLDEASFEKLIKRQIKHGIDVVVPVGTTGESATLTHDEHRICIEIAVDACKGTNVKVLAGAGSNATHEAIGIAKFAQAHGAHGILSVAPYYNKPTQEGLYEHYKAIANSIEIPVLLYNVPGRVGVDILPATVFRLFKDCKNIYGIKEATGSIDRCVDLLAHEPDLVVISGEDAINYPILSNGGKGVISVTANLLPDQISQLTHLAMNEEYKKAKLINDNLYTINKTLFCESNPIPIKAAMYLAGLIDTLEYRLPLCKPSKENFKKIEEVIKNYEIKGF.

Thr47 serves as a coordination point for pyruvate. Tyr136 (proton donor/acceptor) is an active-site residue. The Schiff-base intermediate with substrate role is filled by Lys165. Ile206 provides a ligand contact to pyruvate.

The protein belongs to the DapA family. Homotetramer; dimer of dimers.

The protein resides in the cytoplasm. It catalyses the reaction L-aspartate 4-semialdehyde + pyruvate = (2S,4S)-4-hydroxy-2,3,4,5-tetrahydrodipicolinate + H2O + H(+). It participates in amino-acid biosynthesis; L-lysine biosynthesis via DAP pathway; (S)-tetrahydrodipicolinate from L-aspartate: step 3/4. Its function is as follows. Catalyzes the condensation of (S)-aspartate-beta-semialdehyde [(S)-ASA] and pyruvate to 4-hydroxy-tetrahydrodipicolinate (HTPA). In Campylobacter concisus (strain 13826), this protein is 4-hydroxy-tetrahydrodipicolinate synthase.